Consider the following 363-residue polypeptide: UDP-N-acetylglucosamine--N-acetylmuramyl-(pentapeptide) pyrophosphoryl-undecaprenol N-acetylglucosamine transferase (363 aa).

UDP-N-acetyl-alpha-D-glucosamine contacts are provided by residues 7 to 9 (TGG), N125, S196, I251, and Q296.

This sequence belongs to the glycosyltransferase 28 family. MurG subfamily.

It localises to the cell membrane. The catalysed reaction is Mur2Ac(oyl-L-Ala-gamma-D-Glu-L-Lys-D-Ala-D-Ala)-di-trans,octa-cis-undecaprenyl diphosphate + UDP-N-acetyl-alpha-D-glucosamine = beta-D-GlcNAc-(1-&gt;4)-Mur2Ac(oyl-L-Ala-gamma-D-Glu-L-Lys-D-Ala-D-Ala)-di-trans,octa-cis-undecaprenyl diphosphate + UDP + H(+). The protein operates within cell wall biogenesis; peptidoglycan biosynthesis. Cell wall formation. Catalyzes the transfer of a GlcNAc subunit on undecaprenyl-pyrophosphoryl-MurNAc-pentapeptide (lipid intermediate I) to form undecaprenyl-pyrophosphoryl-MurNAc-(pentapeptide)GlcNAc (lipid intermediate II). This chain is UDP-N-acetylglucosamine--N-acetylmuramyl-(pentapeptide) pyrophosphoryl-undecaprenol N-acetylglucosamine transferase, found in Latilactobacillus sakei subsp. sakei (strain 23K) (Lactobacillus sakei subsp. sakei).